The sequence spans 251 residues: 14-3-3-like protein (251 aa).

The protein belongs to the 14-3-3 family.

The sequence is that of 14-3-3-like protein from Fucus vesiculosus (Bladder wrack).